A 355-amino-acid polypeptide reads, in one-letter code: MAPSVTIDNSSDFSPITTNFKTTSFNPRTLLLAPPSIASHEEKLRNVLATHDRTVTDLQMLDRLSAGLVTLPESTYDLVLILTDADGTRVESKGLLTRDVFGKITQALKAGAKLQAQDGTFGQEIDGAEYQEAILSGLVAEGGVMLKPDYSASVAVPLRLRRKDNSKNAAVSSAGPAVSMAAVPLHGKRKSVDMTDDVPEKDVPKVDSPKNDAPKGVGFIDFSDDFDAEDDDDELIDEDTLLTEEDMKKPLAIPPECAPRAGKRRRACKDCTCGLAEKLAKEDADKRATADSQLQALKLDADDLAEVDFTVQGKVGSCGNCSLGDAFRCDGCPYIGMPAFKPGEEVRLLNNDVQL.

Positions 23-156 (TSFNPRTLLL…KPDYSASVAV (134 aa)) are N-terminal SAM-like domain. The linker stretch occupies residues 157-247 (PLRLRRKDNS…EDTLLTEEDM (91 aa)). A disordered region spans residues 189-214 (RKSVDMTDDVPEKDVPKVDSPKNDAP). A compositionally biased stretch (basic and acidic residues) spans 190-213 (KSVDMTDDVPEKDVPKVDSPKNDA). The [2Fe-2S] cluster site is built by cysteine 257, cysteine 268, cysteine 271, and cysteine 273. The segment at 257 to 273 (CAPRAGKRRRACKDCTC) is fe-S binding site A. Residues cysteine 318, cysteine 321, cysteine 329, and cysteine 332 each contribute to the [4Fe-4S] cluster site. 2 short sequence motifs (cx2C motif) span residues 318-321 (CGNC) and 329-332 (CDGC). Positions 318-332 (CGNCSLGDAFRCDGC) are fe-S binding site B.

The protein belongs to the anamorsin family. In terms of assembly, monomer. Interacts with TAH18. Interacts with MIA40. The cofactor is [2Fe-2S] cluster. Requires [4Fe-4S] cluster as cofactor.

The protein localises to the cytoplasm. It is found in the mitochondrion intermembrane space. Component of the cytosolic iron-sulfur (Fe-S) protein assembly (CIA) machinery required for the maturation of extramitochondrial Fe-S proteins. Part of an electron transfer chain functioning in an early step of cytosolic Fe-S biogenesis, facilitating the de novo assembly of a [4Fe-4S] cluster on the scaffold complex CFD1-NBP35. Electrons are transferred to DRE2 from NADPH via the FAD- and FMN-containing protein TAH18. TAH18-DRE2 are also required for the assembly of the diferric tyrosyl radical cofactor of ribonucleotide reductase (RNR), probably by providing electrons for reduction during radical cofactor maturation in the catalytic small subunit RNR2. The chain is Fe-S cluster assembly protein DRE2 from Botryotinia fuckeliana (strain B05.10) (Noble rot fungus).